The following is a 132-amino-acid chain: Putative RNase AF_0947 (132 aa).

Active-site residues include arginine 91 and histidine 96. Positions 91–98 (RNAIAHHY) match the RX(4)HXY motif motif. An O-di-AMP-tyrosine modification is found at tyrosine 98.

It belongs to the HepT RNase toxin family. In terms of assembly, homodimer, probably forms a complex with cognate antitoxin AF_0948. Modified by cognate antitoxin AF_0948; probably at least 2 successive AMPylation events occur on Tyr-98.

Functionally, probable toxic component of a putative type VII toxin-antitoxin (TA) system, probably an RNase. Probably neutralized by cognate antitoxin AF_0948. Neutralization may be due to AMPylation by AF_0948. The polypeptide is Putative RNase AF_0947 (Archaeoglobus fulgidus (strain ATCC 49558 / DSM 4304 / JCM 9628 / NBRC 100126 / VC-16)).